The chain runs to 143 residues: MSGNKMKMEFLSKSQNESFARVAVAAFISQLDPTMEEITDVKTAVSEAVTNSIIHGYGDREDGIVKIQCEIFEKDITIIVEDDGIGIEDVKQAMTPLYTSRPDLERSGMGFTVMETFMDELRVESTEKNGTRIIMKKKLKSIE.

This sequence belongs to the anti-sigma-factor family.

The catalysed reaction is L-seryl-[protein] + ATP = O-phospho-L-seryl-[protein] + ADP + H(+). It carries out the reaction L-threonyl-[protein] + ATP = O-phospho-L-threonyl-[protein] + ADP + H(+). Functionally, binds to sigma F and blocks its ability to form an RNA polymerase holoenzyme (E-sigma F). Phosphorylates SpoIIAA on a serine residue. This phosphorylation may enable SpoIIAA to act as an anti-anti-sigma factor that counteracts SpoIIAB and thus releases sigma F from inhibition. This is Anti-sigma F factor from Clostridium novyi (strain NT).